We begin with the raw amino-acid sequence, 495 residues long: Lysine--tRNA ligase (495 aa).

2 residues coordinate Mg(2+): E406 and E413.

The protein belongs to the class-II aminoacyl-tRNA synthetase family. As to quaternary structure, homodimer. The cofactor is Mg(2+).

The protein localises to the cytoplasm. The catalysed reaction is tRNA(Lys) + L-lysine + ATP = L-lysyl-tRNA(Lys) + AMP + diphosphate. The sequence is that of Lysine--tRNA ligase from Staphylococcus saprophyticus subsp. saprophyticus (strain ATCC 15305 / DSM 20229 / NCIMB 8711 / NCTC 7292 / S-41).